Here is a 453-residue protein sequence, read N- to C-terminus: Bifunctional protein GlmU (453 aa).

Residues 1–225 (MNIVILAAGT…EWETLGVNSK (225 aa)) form a pyrophosphorylase region. Residues 6 to 9 (LAAG), Lys-20, Gln-71, 76 to 77 (GT), 98 to 100 (YGD), Gly-135, Glu-150, Asn-165, and Asn-223 each bind UDP-N-acetyl-alpha-D-glucosamine. Position 100 (Asp-100) interacts with Mg(2+). A Mg(2+)-binding site is contributed by Asn-223. Positions 226 to 246 (QQLAELERIHQRNVADALLVA) are linker. Residues 247–453 (GVTLADPARL…GYVRPTKKKS (207 aa)) form an N-acetyltransferase region. 2 residues coordinate UDP-N-acetyl-alpha-D-glucosamine: Arg-329 and Lys-347. His-359 (proton acceptor) is an active-site residue. Residues Tyr-362 and Asn-373 each coordinate UDP-N-acetyl-alpha-D-glucosamine. Acetyl-CoA is bound by residues Ala-376, 382–383 (NY), Ser-401, and Ala-419.

This sequence in the N-terminal section; belongs to the N-acetylglucosamine-1-phosphate uridyltransferase family. The protein in the C-terminal section; belongs to the transferase hexapeptide repeat family. Homotrimer. Mg(2+) serves as cofactor.

It is found in the cytoplasm. The enzyme catalyses alpha-D-glucosamine 1-phosphate + acetyl-CoA = N-acetyl-alpha-D-glucosamine 1-phosphate + CoA + H(+). It carries out the reaction N-acetyl-alpha-D-glucosamine 1-phosphate + UTP + H(+) = UDP-N-acetyl-alpha-D-glucosamine + diphosphate. Its pathway is nucleotide-sugar biosynthesis; UDP-N-acetyl-alpha-D-glucosamine biosynthesis; N-acetyl-alpha-D-glucosamine 1-phosphate from alpha-D-glucosamine 6-phosphate (route II): step 2/2. It functions in the pathway nucleotide-sugar biosynthesis; UDP-N-acetyl-alpha-D-glucosamine biosynthesis; UDP-N-acetyl-alpha-D-glucosamine from N-acetyl-alpha-D-glucosamine 1-phosphate: step 1/1. The protein operates within bacterial outer membrane biogenesis; LPS lipid A biosynthesis. Functionally, catalyzes the last two sequential reactions in the de novo biosynthetic pathway for UDP-N-acetylglucosamine (UDP-GlcNAc). The C-terminal domain catalyzes the transfer of acetyl group from acetyl coenzyme A to glucosamine-1-phosphate (GlcN-1-P) to produce N-acetylglucosamine-1-phosphate (GlcNAc-1-P), which is converted into UDP-GlcNAc by the transfer of uridine 5-monophosphate (from uridine 5-triphosphate), a reaction catalyzed by the N-terminal domain. This Paraburkholderia xenovorans (strain LB400) protein is Bifunctional protein GlmU.